The chain runs to 299 residues: 4-diphosphocytidyl-2-C-methyl-D-erythritol kinase (299 aa).

Residue Lys11 is part of the active site. ATP is bound at residue 94–104 (PQGGGLGGGSS). Asp136 is an active-site residue.

This sequence belongs to the GHMP kinase family. IspE subfamily.

The catalysed reaction is 4-CDP-2-C-methyl-D-erythritol + ATP = 4-CDP-2-C-methyl-D-erythritol 2-phosphate + ADP + H(+). The protein operates within isoprenoid biosynthesis; isopentenyl diphosphate biosynthesis via DXP pathway; isopentenyl diphosphate from 1-deoxy-D-xylulose 5-phosphate: step 3/6. In terms of biological role, catalyzes the phosphorylation of the position 2 hydroxy group of 4-diphosphocytidyl-2C-methyl-D-erythritol. This Bordetella bronchiseptica (strain ATCC BAA-588 / NCTC 13252 / RB50) (Alcaligenes bronchisepticus) protein is 4-diphosphocytidyl-2-C-methyl-D-erythritol kinase.